Consider the following 72-residue polypeptide: Translation initiation factor IF-1 (72 aa).

An S1-like domain is found at 1–72; it reads MSKDDVIEMQ…SRGRITWRAK (72 aa).

It belongs to the IF-1 family. In terms of assembly, component of the 30S ribosomal translation pre-initiation complex which assembles on the 30S ribosome in the order IF-2 and IF-3, IF-1 and N-formylmethionyl-tRNA(fMet); mRNA recruitment can occur at any time during PIC assembly.

The protein localises to the cytoplasm. In terms of biological role, one of the essential components for the initiation of protein synthesis. Stabilizes the binding of IF-2 and IF-3 on the 30S subunit to which N-formylmethionyl-tRNA(fMet) subsequently binds. Helps modulate mRNA selection, yielding the 30S pre-initiation complex (PIC). Upon addition of the 50S ribosomal subunit IF-1, IF-2 and IF-3 are released leaving the mature 70S translation initiation complex. This Clostridium novyi (strain NT) protein is Translation initiation factor IF-1.